The primary structure comprises 1156 residues: Pesticidal crystal protein Cry9Aa (1156 aa).

A propeptide spans 1 to 23 (removed in mature form); that stretch reads MNQNKHGIIGASNCGCASDDVAK.

It belongs to the delta endotoxin family.

In terms of biological role, promotes colloidosmotic lysis by binding to the midgut epithelial cells of insects. This protein is toxic to Galleria mellonella. The polypeptide is Pesticidal crystal protein Cry9Aa (cry9Aa) (Bacillus thuringiensis subsp. galleriae).